The following is a 602-amino-acid chain: Glutamyl-tRNA(Gln) amidotransferase subunit B, mitochondrial (602 aa).

A mitochondrion-targeting transit peptide spans 1–56 (MFRSCLRHCRRATVRSRTCPRCSHHEIPQLQVVQRQISLSSSFPHIRRLQTSSTDT).

This sequence belongs to the GatB/GatE family. GatB subfamily. Subunit of the heterotrimeric GatCAB amidotransferase (AdT) complex, composed of A, B and C subunits.

Its subcellular location is the mitochondrion. It catalyses the reaction L-glutamyl-tRNA(Gln) + L-glutamine + ATP + H2O = L-glutaminyl-tRNA(Gln) + L-glutamate + ADP + phosphate + H(+). In terms of biological role, allows the formation of correctly charged Gln-tRNA(Gln) through the transamidation of misacylated Glu-tRNA(Gln) in the mitochondria. The reaction takes place in the presence of glutamine and ATP through an activated gamma-phospho-Glu-tRNA(Gln). This chain is Glutamyl-tRNA(Gln) amidotransferase subunit B, mitochondrial (nempA), found in Emericella nidulans (strain FGSC A4 / ATCC 38163 / CBS 112.46 / NRRL 194 / M139) (Aspergillus nidulans).